We begin with the raw amino-acid sequence, 342 residues long: Glucokinase (342 aa).

Position 7-12 (7-12 (GDIGGT)) interacts with ATP.

It belongs to the bacterial glucokinase family.

It is found in the cytoplasm. It catalyses the reaction D-glucose + ATP = D-glucose 6-phosphate + ADP + H(+). The polypeptide is Glucokinase (Trichormus variabilis (strain ATCC 29413 / PCC 7937) (Anabaena variabilis)).